A 539-amino-acid polypeptide reads, in one-letter code: T-complex protein 1 subunit delta (539 aa).

Residues 1–28 (MPENVASRSGPPAAGPGNRGKGAYQDRD) are disordered. R19 carries the post-translational modification Omega-N-methylarginine. Position 21 is an N6-acetyllysine (K21). Residue S36 is modified to Phosphoserine. ADP is bound at residue G53. G53 is an ATP binding site. D104 lines the Mg(2+) pocket. G105, T106, T107, S108, N172, S173, and K174 together coordinate ADP. Residues G105 and T106 each coordinate ATP. K174 contributes to the ATP binding site. 2 positions are modified to phosphoserine: S184 and S202. N6-acetyllysine is present on residues K288, K302, K319, and K326. ADP is bound at residue G425. S444 bears the Phosphoserine mark. Residue Q510 coordinates ADP.

Belongs to the TCP-1 chaperonin family. As to quaternary structure, component of the chaperonin-containing T-complex (TRiC), a hexadecamer composed of two identical back-to-back stacked rings enclosing a protein folding chamber. Each ring is made up of eight different subunits: TCP1/CCT1, CCT2, CCT3, CCT4, CCT5, CCT6A/CCT6, CCT7, CCT8. Interacts with PACRG. Interacts with DNAAF4. Interacts with DLEC1.

The protein resides in the cytoplasm. It is found in the melanosome. It localises to the cytoskeleton. The protein localises to the microtubule organizing center. Its subcellular location is the centrosome. The protein resides in the cilium basal body. The enzyme catalyses ATP + H2O = ADP + phosphate + H(+). Functionally, component of the chaperonin-containing T-complex (TRiC), a molecular chaperone complex that assists the folding of actin, tubulin and other proteins upon ATP hydrolysis. The TRiC complex mediates the folding of WRAP53/TCAB1, thereby regulating telomere maintenance. As part of the TRiC complex may play a role in the assembly of BBSome, a complex involved in ciliogenesis regulating transports vesicles to the cilia. The polypeptide is T-complex protein 1 subunit delta (Cct4) (Rattus norvegicus (Rat)).